A 28-amino-acid polypeptide reads, in one-letter code: Endoglucanase (28 aa).

Glu20 serves as the catalytic Nucleophile.

Belongs to the glycosyl hydrolase 5 (cellulase A) family.

Its subcellular location is the cell membrane. The enzyme catalyses Endohydrolysis of (1-&gt;4)-beta-D-glucosidic linkages in cellulose, lichenin and cereal beta-D-glucans.. In Schizophyllum commune (Split gill fungus), this protein is Endoglucanase.